A 702-amino-acid chain; its full sequence is Elongation factor G (702 aa).

A tr-type G domain is found at 8–290 (ERYRNIGISA…AVIDYLPSPV (283 aa)). GTP is bound by residues 17–24 (AHIDAGKT), 88–92 (DTPGH), and 142–145 (NKMD).

The protein belongs to the TRAFAC class translation factor GTPase superfamily. Classic translation factor GTPase family. EF-G/EF-2 subfamily.

The protein resides in the cytoplasm. Its function is as follows. Catalyzes the GTP-dependent ribosomal translocation step during translation elongation. During this step, the ribosome changes from the pre-translocational (PRE) to the post-translocational (POST) state as the newly formed A-site-bound peptidyl-tRNA and P-site-bound deacylated tRNA move to the P and E sites, respectively. Catalyzes the coordinated movement of the two tRNA molecules, the mRNA and conformational changes in the ribosome. In Acidovorax sp. (strain JS42), this protein is Elongation factor G.